We begin with the raw amino-acid sequence, 317 residues long: NADH-quinone oxidoreductase subunit H 1 (317 aa).

A run of 8 helical transmembrane segments spans residues 7-27, 74-94, 107-127, 147-167, 179-199, 230-250, 257-277, and 297-317; these read IWVN…MLSW, AVFV…FAVV, IGVL…VLGG, LSYE…AGSF, LWFC…GIAE, FFIG…TLFF, VLPP…CFVL, and VMLP…LSVA.

This sequence belongs to the complex I subunit 1 family. As to quaternary structure, NDH-1 is composed of 14 different subunits. Subunits NuoA, H, J, K, L, M, N constitute the membrane sector of the complex.

Its subcellular location is the cell inner membrane. It carries out the reaction a quinone + NADH + 5 H(+)(in) = a quinol + NAD(+) + 4 H(+)(out). NDH-1 shuttles electrons from NADH, via FMN and iron-sulfur (Fe-S) centers, to quinones in the respiratory chain. The immediate electron acceptor for the enzyme in this species is believed to be ubiquinone. Couples the redox reaction to proton translocation (for every two electrons transferred, four hydrogen ions are translocated across the cytoplasmic membrane), and thus conserves the redox energy in a proton gradient. This subunit may bind ubiquinone. This chain is NADH-quinone oxidoreductase subunit H 1, found in Nitrosospira multiformis (strain ATCC 25196 / NCIMB 11849 / C 71).